Here is a 155-residue protein sequence, read N- to C-terminus: MSEKYVVTWDMFQMHARRLSERLLPASQWKGIIAVSRGGLFPAAVLARELGLRHIETVCIASYHDHNNQGELQVLHAAQVPNGGEGFIVVDDLVDTGNTARAIRQMYPNAKFVTVFAKPAGAELVDDYVIDIPQNTWIEQPWDLGLTFVPPLSRK.

5-phospho-alpha-D-ribose 1-diphosphate-binding positions include 37 to 38 (RG) and 91 to 99 (DDLVDTGNT). Residue D92 participates in Mg(2+) binding. D95 and I138 together coordinate guanine. Residues D95 and I138 each contribute to the xanthine site. GMP-binding positions include 95-99 (DTGNT) and 137-138 (WI).

Belongs to the purine/pyrimidine phosphoribosyltransferase family. XGPT subfamily. In terms of assembly, homotetramer. It depends on Mg(2+) as a cofactor.

The protein resides in the cell inner membrane. It carries out the reaction GMP + diphosphate = guanine + 5-phospho-alpha-D-ribose 1-diphosphate. The enzyme catalyses XMP + diphosphate = xanthine + 5-phospho-alpha-D-ribose 1-diphosphate. It catalyses the reaction IMP + diphosphate = hypoxanthine + 5-phospho-alpha-D-ribose 1-diphosphate. The protein operates within purine metabolism; GMP biosynthesis via salvage pathway; GMP from guanine: step 1/1. It functions in the pathway purine metabolism; XMP biosynthesis via salvage pathway; XMP from xanthine: step 1/1. Its function is as follows. Acts on guanine, xanthine and to a lesser extent hypoxanthine. In terms of biological role, purine salvage pathway enzyme that catalyzes the transfer of the ribosyl-5-phosphate group from 5-phospho-alpha-D-ribose 1-diphosphate (PRPP) to the N9 position of the 6-oxopurines guanine and xanthine to form the corresponding ribonucleotides GMP (guanosine 5'-monophosphate) and XMP (xanthosine 5'-monophosphate), with the release of PPi. To a lesser extent, also acts on hypoxanthine. The sequence is that of Xanthine-guanine phosphoribosyltransferase from Haemophilus influenzae (strain ATCC 51907 / DSM 11121 / KW20 / Rd).